Here is a 205-residue protein sequence, read N- to C-terminus: Large ribosomal subunit protein uL3 (205 aa).

This sequence belongs to the universal ribosomal protein uL3 family. Part of the 50S ribosomal subunit. Forms a cluster with proteins L14 and L19.

Functionally, one of the primary rRNA binding proteins, it binds directly near the 3'-end of the 23S rRNA, where it nucleates assembly of the 50S subunit. The chain is Large ribosomal subunit protein uL3 from Thermosipho melanesiensis (strain DSM 12029 / CIP 104789 / BI429).